Consider the following 297-residue polypeptide: Probable endonuclease 4 (297 aa).

Residues His69, His110, Glu145, Asp179, His182, His214, Asp227, His229, and Glu259 each coordinate Zn(2+).

It belongs to the AP endonuclease 2 family. Zn(2+) serves as cofactor.

It catalyses the reaction Endonucleolytic cleavage to 5'-phosphooligonucleotide end-products.. Endonuclease IV plays a role in DNA repair. It cleaves phosphodiester bonds at apurinic or apyrimidinic (AP) sites, generating a 3'-hydroxyl group and a 5'-terminal sugar phosphate. This Bacillus licheniformis (strain ATCC 14580 / DSM 13 / JCM 2505 / CCUG 7422 / NBRC 12200 / NCIMB 9375 / NCTC 10341 / NRRL NRS-1264 / Gibson 46) protein is Probable endonuclease 4.